The following is a 276-amino-acid chain: MAD2L1-binding protein (276 aa).

Residues 1–10 (MAASGEEDMS) show a composition bias toward acidic residues. The disordered stretch occupies residues 1–30 (MAASGEEDMSELSPAAAPNLDWYEKPEETH). Positions 49 to 81 (PAEPFCPRDLVPVVFPGPVSQEDCCQFTCELLK) are interaction with MAD2L1.

It belongs to the MAD2L1BP family. In terms of assembly, interacts with MAD2L1.

The protein resides in the nucleus. Its subcellular location is the nucleoplasm. It is found in the cytoplasm. The protein localises to the cytoskeleton. It localises to the spindle. Its function is as follows. May function to silence the spindle checkpoint and allow mitosis to proceed through anaphase by binding MAD2L1 after it has become dissociated from the MAD2L1-CDC20 complex. This chain is MAD2L1-binding protein (Mad2l1bp), found in Mus musculus (Mouse).